Consider the following 366-residue polypeptide: MFTRKSVILMAVLLIWSAVSYAERVKDLANVAGVRPNQLIGYGLVVGLSGTGDKTSYADQSLMSMLNKFGINLPPGTKTNSKNVAAVAVHADLPAFSKSGQRIDVTVSSLGNAKSLRGGTLLLTPLKGVDGNVYALAQGNLIVGGLDASGADGSRITVNVPSVGRVPGGGIVEKTVNTGFDLGNTITLNLKNSDFTTATNLVNAINAKLGKGTAYATDAESVEVMAPRIPNQRVAFLSVIENIEVTPGVDSAKVIINSRTGTVVIGSNVKVSAAAVTHGNLVVKVSESKDVSQPNPFAGGNTQVTPKTELSVESEGKGRMFKFPKGVTLDDIVQAVNKVGAAPGDLVAILEALKQSGALSADLMVI.

The N-terminal stretch at 1–22 (MFTRKSVILMAVLLIWSAVSYA) is a signal peptide.

Belongs to the FlgI family. The basal body constitutes a major portion of the flagellar organelle and consists of four rings (L,P,S, and M) mounted on a central rod.

The protein resides in the periplasm. The protein localises to the bacterial flagellum basal body. Functionally, assembles around the rod to form the L-ring and probably protects the motor/basal body from shearing forces during rotation. The polypeptide is Flagellar P-ring protein (Hydrogenovibrio crunogenus (strain DSM 25203 / XCL-2) (Thiomicrospira crunogena)).